The primary structure comprises 458 residues: UPF0210 protein MJ1665 (458 aa).

It belongs to the UPF0210 family.

The chain is UPF0210 protein MJ1665 from Methanocaldococcus jannaschii (strain ATCC 43067 / DSM 2661 / JAL-1 / JCM 10045 / NBRC 100440) (Methanococcus jannaschii).